We begin with the raw amino-acid sequence, 386 residues long: 8-amino-7-oxononanoate synthase (386 aa).

R23 provides a ligand contact to substrate. Pyridoxal 5'-phosphate is bound at residue 110-111 (GY). Position 135 (H135) interacts with substrate. Pyridoxal 5'-phosphate-binding residues include S181, H209, and T236. N6-(pyridoxal phosphate)lysine is present on K239. Position 354 (T354) interacts with substrate.

Belongs to the class-II pyridoxal-phosphate-dependent aminotransferase family. BioF subfamily. As to quaternary structure, homodimer. Requires pyridoxal 5'-phosphate as cofactor.

The catalysed reaction is 6-carboxyhexanoyl-[ACP] + L-alanine + H(+) = (8S)-8-amino-7-oxononanoate + holo-[ACP] + CO2. It participates in cofactor biosynthesis; biotin biosynthesis. Catalyzes the decarboxylative condensation of pimeloyl-[acyl-carrier protein] and L-alanine to produce 8-amino-7-oxononanoate (AON), [acyl-carrier protein], and carbon dioxide. This is 8-amino-7-oxononanoate synthase from Thiobacillus denitrificans (strain ATCC 25259 / T1).